A 753-amino-acid chain; its full sequence is 5-methyltetrahydropteroyltriglutamate--homocysteine methyltransferase (753 aa).

5-methyltetrahydropteroyltri-L-glutamate-binding positions include 17 to 20 (RELK) and Lys-117. Residues 431–433 (IGS) and Glu-484 each bind L-homocysteine. L-methionine-binding positions include 431–433 (IGS) and Glu-484. 5-methyltetrahydropteroyltri-L-glutamate is bound by residues 515–516 (RC) and Trp-561. Asp-599 provides a ligand contact to L-homocysteine. L-methionine is bound at residue Asp-599. Glu-605 provides a ligand contact to 5-methyltetrahydropteroyltri-L-glutamate. His-641, Cys-643, and Glu-665 together coordinate Zn(2+). His-694 serves as the catalytic Proton donor. Cys-726 is a binding site for Zn(2+).

This sequence belongs to the vitamin-B12 independent methionine synthase family. The cofactor is Zn(2+).

It catalyses the reaction 5-methyltetrahydropteroyltri-L-glutamate + L-homocysteine = tetrahydropteroyltri-L-glutamate + L-methionine. It functions in the pathway amino-acid biosynthesis; L-methionine biosynthesis via de novo pathway; L-methionine from L-homocysteine (MetE route): step 1/1. In terms of biological role, catalyzes the transfer of a methyl group from 5-methyltetrahydrofolate to homocysteine resulting in methionine formation. This is 5-methyltetrahydropteroyltriglutamate--homocysteine methyltransferase from Escherichia coli O157:H7 (strain EC4115 / EHEC).